A 394-amino-acid chain; its full sequence is Putative 8-amino-7-oxononanoate synthase (394 aa).

A substrate-binding site is contributed by R21. 107-108 lines the pyridoxal 5'-phosphate pocket; it reads GY. Position 132 (H132) interacts with substrate. Pyridoxal 5'-phosphate contacts are provided by residues S180, 205–208, and 236–239; these read DEAH and TLSK. K239 is modified (N6-(pyridoxal phosphate)lysine). Residue T361 participates in substrate binding.

The protein belongs to the class-II pyridoxal-phosphate-dependent aminotransferase family. BioF subfamily. In terms of assembly, homodimer. Pyridoxal 5'-phosphate is required as a cofactor.

The catalysed reaction is 6-carboxyhexanoyl-[ACP] + L-alanine + H(+) = (8S)-8-amino-7-oxononanoate + holo-[ACP] + CO2. It participates in cofactor biosynthesis; biotin biosynthesis. In terms of biological role, catalyzes the decarboxylative condensation of pimeloyl-[acyl-carrier protein] and L-alanine to produce 8-amino-7-oxononanoate (AON), [acyl-carrier protein], and carbon dioxide. The polypeptide is Putative 8-amino-7-oxononanoate synthase (bioF) (Acaryochloris marina (strain MBIC 11017)).